We begin with the raw amino-acid sequence, 593 residues long: Prospero homeobox protein 2 (593 aa).

Disordered regions lie at residues 24-48 (CMDQ…QLPS), 79-130 (SPSS…GGTR), 153-199 (TEPR…KDLC), 260-284 (QERS…SAYK), 298-333 (PQAG…QSPL), and 356-388 (GRGP…PWGL). Basic and acidic residues predominate over residues 87-99 (RARESLRCPEKGR). A compositionally biased stretch (low complexity) spans 167 to 181 (PRSSPRARPRNSCSS). Residues 363-380 (WSGSPPQDAAFQSHTSPE) are compositionally biased toward polar residues. One can recognise a Prospero-type homeo domain in the interval 433–491 (QEGLSPGHLKKAKLMFFFTRYPSSSLLKAYFPDVQFNRCITSQMIKWFSNFREFYYIQM). The interval 433–591 (QEGLSPGHLK…KSPSFLPGLF (159 aa)) is homeo-Prospero. Positions 492–591 (EKYARQALSD…KSPSFLPGLF (100 aa)) constitute a Prospero domain.

It belongs to the Prospero homeodomain family. As to expression, expressed in testis.

It is found in the nucleus. Functionally, transcription regulator. Does not seem to be essential for embryonic development and postnatal survival. This is Prospero homeobox protein 2 (Prox2) from Mus musculus (Mouse).